A 499-amino-acid polypeptide reads, in one-letter code: Putative sodium-dependent excitatory amino acid transporter glt-4 (499 aa).

Residues 1–7 (MAKLSKE) are Cytoplasmic-facing. A run of 3 helical transmembrane segments spans residues 8 to 28 (NLLL…GFSL), 50 to 70 (FVQM…ITSL), and 87 to 107 (IYYT…VSVI). Residue Asn-165 is glycosylated (N-linked (GlcNAc...) asparagine). The next 3 membrane-spanning stretches (helical) occupy residues 194–217 (VSDG…IGVI), 227–254 (FFKS…TFLI), and 276–297 (ITVI…CVVL). The discontinuously helical intramembrane region spans 303 to 333 (IKFVGGMAQALLTALATSSSSATLPLSIKCC). 320-322 (SSS) contributes to the L-aspartate binding site. Residues 343–369 (VTRFVLPLGATINMDGTALYEAVAAIY) traverse the membrane as a helical segment. Residues Gly-351, Thr-353, and Asn-355 each contribute to the Na(+) site. L-aspartate contacts are provided by residues Thr-359, 400 to 404 (IPQAG), Asp-433, and Asn-440. Residues 383–416 (VVLVSLTATLASIGAAGIPQAGIVTMIMVLIAIG) constitute an intramembrane region (discontinuously helical). The chain crosses the membrane as a helical span at residues 430 to 451 (FMLDRLRTTVNVHGDSIATAVI). The Na(+) site is built by Asn-440 and Asp-444.

Belongs to the dicarboxylate/amino acid:cation symporter (DAACS) (TC 2.A.23) family.

It is found in the cell membrane. Sodium-dependent, high-affinity amino acid transporter that mediates the uptake of L-glutamate and also L-aspartate and D-aspartate. Functions as a symporter that transports one amino acid molecule together with two or three Na(+) ions and one proton, in parallel with the counter-transport of one K(+) ion. Mediates Cl(-) flux that is not coupled to amino acid transport; this avoids the accumulation of negative charges due to aspartate and Na(+) symport. In Caenorhabditis elegans, this protein is Putative sodium-dependent excitatory amino acid transporter glt-4 (glt-4).